Reading from the N-terminus, the 397-residue chain is Iron-sulfur cluster assembly SufBD family protein Mb1497 (397 aa).

Belongs to the iron-sulfur cluster assembly SufBD family.

The polypeptide is Iron-sulfur cluster assembly SufBD family protein Mb1497 (Mycobacterium bovis (strain ATCC BAA-935 / AF2122/97)).